The primary structure comprises 306 residues: D-alanine--D-alanine ligase B (306 aa).

Residues glutamate 15 and serine 150 contribute to the active site. One can recognise an ATP-grasp domain in the interval lysine 101–glutamate 303. Residue isoleucine 134 to threonine 189 coordinates ATP. Mg(2+)-binding residues include aspartate 257, glutamate 270, and asparagine 272. Serine 281 is a catalytic residue.

The protein belongs to the D-alanine--D-alanine ligase family. Monomer. It depends on Mg(2+) as a cofactor. The cofactor is Mn(2+).

The protein resides in the cytoplasm. It carries out the reaction 2 D-alanine + ATP = D-alanyl-D-alanine + ADP + phosphate + H(+). It participates in cell wall biogenesis; peptidoglycan biosynthesis. In terms of biological role, cell wall formation. The polypeptide is D-alanine--D-alanine ligase B (ddlB) (Escherichia coli (strain K12)).